The primary structure comprises 599 residues: Bile salt-activated lipase (599 aa).

The first 20 residues, Met-1–Ala-20, serve as a signal peptide directing secretion. A disulfide bridge links Cys-84 with Cys-100. Asn-207 is a glycosylation site (N-linked (GlcNAc...) asparagine). The active-site Acyl-ester intermediate is the Ser-214. Cysteines 266 and 277 form a disulfide. N-linked (GlcNAc...) asparagine glycosylation occurs at Asn-325. Residues Asp-340 and His-455 each act as charge relay system in the active site. The interval Thr-553–Phe-599 is disordered. 3 tandem repeats follow at residues Leu-559–Ala-569, Pro-570–Val-580, and Pro-581–Ser-588. Residues Leu-559–Ser-588 are 4 X 11 AA tandem repeats, O-glycosylated region.

The protein belongs to the type-B carboxylesterase/lipase family. Interacts with CLC. As to expression, EXpressed by eosinophils.

Its subcellular location is the secreted. The enzyme catalyses a triacylglycerol + H2O = a diacylglycerol + a fatty acid + H(+). It carries out the reaction 1,2,3-tri-(9Z-octadecenoyl)-glycerol + H2O = di-(9Z)-octadecenoylglycerol + (9Z)-octadecenoate + H(+). It catalyses the reaction 1,2,3-trioctanoylglycerol + H2O = dioctanoylglycerol + octanoate + H(+). The catalysed reaction is a sterol ester + H2O = a sterol + a fatty acid + H(+). The enzyme catalyses an acetyl ester + H2O = an aliphatic alcohol + acetate + H(+). It carries out the reaction a butanoate ester + H2O = an aliphatic alcohol + butanoate + H(+). It catalyses the reaction 9-hexadecanoyloxy-octadecanoate + H2O = 9-hydroxy-octadecanoate + hexadecanoate + H(+). The catalysed reaction is 9-(9Z-octadecenoyloxy)-octadecanoate + H2O = 9-hydroxy-octadecanoate + (9Z)-octadecenoate + H(+). The enzyme catalyses cholesteryl (9Z-octadecenoate) + H2O = cholesterol + (9Z)-octadecenoate + H(+). It carries out the reaction 1-hexadecanoyl-sn-glycero-3-phosphocholine + H2O = sn-glycerol 3-phosphocholine + hexadecanoate + H(+). It catalyses the reaction 12-hexadecanoyloxy-octadecanoate + H2O = 12-hydroxyoctadecanoate + hexadecanoate + H(+). The catalysed reaction is 12-(9Z-octadecenoyloxy)-octadecanoate + H2O = 12-hydroxyoctadecanoate + (9Z)-octadecenoate + H(+). The enzyme catalyses 13-(9Z-octadecenoyloxy)-octadecanoate + H2O = 13-hydroxy-octadecanoate + (9Z)-octadecenoate + H(+). It carries out the reaction 9-(9Z-hexadecenoyloxy)-octadecanoate + H2O = (9Z)-hexadecenoate + 9-hydroxy-octadecanoate + H(+). It catalyses the reaction 12-(9Z-hexadecenoyloxy)-octadecanoate + H2O = 12-hydroxyoctadecanoate + (9Z)-hexadecenoate + H(+). The catalysed reaction is 13-(9Z-hexadecenoyloxy)-octadecanoate + H2O = 13-hydroxy-octadecanoate + (9Z)-hexadecenoate + H(+). The enzyme catalyses 12-octadecanoyloxy-octadecanoate + H2O = 12-hydroxyoctadecanoate + octadecanoate + H(+). It carries out the reaction 13-octadecanoyloxy-octadecanoate + H2O = 13-hydroxy-octadecanoate + octadecanoate + H(+). It catalyses the reaction 5-(9Z-hexadecenoyloxy)-octadecanoate + H2O = 5-hydroxy-octadecanoate + (9Z)-hexadecenoate + H(+). The catalysed reaction is 9-octadecanoyloxy-octadecanoate + H2O = 9-hydroxy-octadecanoate + octadecanoate + H(+). Its activity is regulated as follows. Activated by bile salts such as sodium taurocholate. Its function is as follows. Catalyzes the hydrolysis of a wide range of substrates including cholesteryl esters, phospholipids, lysophospholipids, di- and tri-acylglycerols, and fatty acid esters of hydroxy fatty acids (FAHFAs). Preferentially hydrolyzes FAHFAs with the ester bond further away from the carboxylate. Unsaturated FAHFAs are hydrolyzed more quickly than saturated FAHFAs. Has an essential role in the complete digestion of dietary lipids and their intestinal absorption, along with the absorption of fat-soluble vitamins. The chain is Bile salt-activated lipase (Cel) from Mus musculus (Mouse).